Here is a 177-residue protein sequence, read N- to C-terminus: 2''-aminoglycoside nucleotidyltransferase (177 aa).

The tract at residues 1–92 (MDTTQVTLIH…ELLDCEPAWW (92 aa)) is N-terminal domain. Residues aspartate 44, aspartate 46, and aspartate 86 each contribute to the Mg(2+) site. Aspartate 86 serves as the catalytic Proton acceptor. The tract at residues 93-177 (ADEAYEIAEA…RAAFRSRYAA (85 aa)) is C-terminal domain. Kanamycin A is bound at residue alanine 100.

As to quaternary structure, monomer. Mg(2+) is required as a cofactor.

The catalysed reaction is nucleoside triphosphate + gentamicin = diphosphate + 2''-nucleotidylgentamicin.. Mediates bacterial resistance to kanamycin, gentamicin, dibekacin, sisomicin and tobramycin by adenylating the 2''-hydroxyl group of these antibiotics. The protein is 2''-aminoglycoside nucleotidyltransferase of Klebsiella pneumoniae.